The sequence spans 461 residues: Fumarate hydratase class II (461 aa).

Substrate is bound by residues 97-99 (SGT), 127-130 (HPND), 137-139 (SSN), and Thr-185. The active-site Proton donor/acceptor is the His-186. Ser-316 is a catalytic residue. Substrate contacts are provided by residues Ser-317 and 322–324 (KVN).

Belongs to the class-II fumarase/aspartase family. Fumarase subfamily. Homotetramer.

Its subcellular location is the cytoplasm. The enzyme catalyses (S)-malate = fumarate + H2O. The protein operates within carbohydrate metabolism; tricarboxylic acid cycle; (S)-malate from fumarate: step 1/1. Involved in the TCA cycle. Catalyzes the stereospecific interconversion of fumarate to L-malate. The protein is Fumarate hydratase class II of Staphylococcus aureus (strain COL).